The chain runs to 371 residues: 4-hydroxy-3-methylbut-2-en-1-yl diphosphate synthase (flavodoxin) (371 aa).

4 residues coordinate [4Fe-4S] cluster: Cys270, Cys273, Cys305, and Glu312.

The protein belongs to the IspG family. The cofactor is [4Fe-4S] cluster.

The catalysed reaction is (2E)-4-hydroxy-3-methylbut-2-enyl diphosphate + oxidized [flavodoxin] + H2O + 2 H(+) = 2-C-methyl-D-erythritol 2,4-cyclic diphosphate + reduced [flavodoxin]. The protein operates within isoprenoid biosynthesis; isopentenyl diphosphate biosynthesis via DXP pathway; isopentenyl diphosphate from 1-deoxy-D-xylulose 5-phosphate: step 5/6. Its function is as follows. Converts 2C-methyl-D-erythritol 2,4-cyclodiphosphate (ME-2,4cPP) into 1-hydroxy-2-methyl-2-(E)-butenyl 4-diphosphate. The chain is 4-hydroxy-3-methylbut-2-en-1-yl diphosphate synthase (flavodoxin) from Shewanella frigidimarina (strain NCIMB 400).